The following is a 336-amino-acid chain: Izumo sperm-egg fusion protein 1 (336 aa).

The signal sequence occupies residues 1-16 (MTLPILLGWFLTLCSS). The Ig-like C2-type domain occupies 158-247 (PPLDCGEHHL…LKDQKGTALS (90 aa)). A disulfide bridge connects residues Cys179 and Cys236. The helical transmembrane segment at 287–307 (SFLTVLILLTVLSITGSLIII) threads the bilayer.

The protein belongs to the Izumo family. In terms of assembly, forms a complex with tmem81 and spaca6 on spermatocyte cell membrane. The complex binds to oocyte protein bncr. In terms of tissue distribution, expressed in sperm.

It is found in the cell membrane. It localises to the cytoplasmic vesicle. Its subcellular location is the secretory vesicle. The protein localises to the acrosome membrane. Essential sperm cell-surface protein required for fertilization by acting as a ligand for bncr receptor on egg. The interaction of the complex izumo1:spaca6:tmemt81 with bncr is a necessary adhesion event between sperm and egg that is required for fertilization. The protein is Izumo sperm-egg fusion protein 1 of Danio rerio (Zebrafish).